The following is a 63-amino-acid chain: Beta-defensin 38 (63 aa).

Residues 1 to 21 form the signal peptide; sequence MKISCFLLLILSLYFFQINQA. 3 disulfide bridges follow: C29–C58, C36–C51, and C41–C59.

It belongs to the beta-defensin family. Only expressed in epididymis (caput, corpus and cauda).

The protein resides in the secreted. In terms of biological role, synthetic Defb38 kills both Gram-negative (E.coli and P.aeruginosa) and Gram-positive (E.faecium) bacteria. In Mus musculus (Mouse), this protein is Beta-defensin 38 (Defb38).